Here is a 115-residue protein sequence, read N- to C-terminus: Ribonuclease P protein component (115 aa).

Belongs to the RnpA family. Consists of a catalytic RNA component (M1 or rnpB) and a protein subunit.

The catalysed reaction is Endonucleolytic cleavage of RNA, removing 5'-extranucleotides from tRNA precursor.. Functionally, RNaseP catalyzes the removal of the 5'-leader sequence from pre-tRNA to produce the mature 5'-terminus. It can also cleave other RNA substrates such as 4.5S RNA. The protein component plays an auxiliary but essential role in vivo by binding to the 5'-leader sequence and broadening the substrate specificity of the ribozyme. The protein is Ribonuclease P protein component of Buchnera aphidicola subsp. Acyrthosiphon pisum (strain APS) (Acyrthosiphon pisum symbiotic bacterium).